The sequence spans 156 residues: ATP synthase subunit b (156 aa).

Residues alanine 11–alanine 31 traverse the membrane as a helical segment.

It belongs to the ATPase B chain family. In terms of assembly, F-type ATPases have 2 components, F(1) - the catalytic core - and F(0) - the membrane proton channel. F(1) has five subunits: alpha(3), beta(3), gamma(1), delta(1), epsilon(1). F(0) has three main subunits: a(1), b(2) and c(10-14). The alpha and beta chains form an alternating ring which encloses part of the gamma chain. F(1) is attached to F(0) by a central stalk formed by the gamma and epsilon chains, while a peripheral stalk is formed by the delta and b chains.

The protein resides in the cell inner membrane. Its function is as follows. F(1)F(0) ATP synthase produces ATP from ADP in the presence of a proton or sodium gradient. F-type ATPases consist of two structural domains, F(1) containing the extramembraneous catalytic core and F(0) containing the membrane proton channel, linked together by a central stalk and a peripheral stalk. During catalysis, ATP synthesis in the catalytic domain of F(1) is coupled via a rotary mechanism of the central stalk subunits to proton translocation. In terms of biological role, component of the F(0) channel, it forms part of the peripheral stalk, linking F(1) to F(0). In Enterobacter sp. (strain 638), this protein is ATP synthase subunit b.